The chain runs to 220 residues: MAKNKFNTAWLHDHINDPYVKMAQREGYRARAAYKLKEIDEQDKLIRAGQVIVDLGSTPGSWSQYARNKLAKGAQRDAEREGGIDGTIIALDLLPMEPIADVHFIQGDFREDSVIAQLEELVGERQVDLVISDMAPNLSGVAVADAARIEHLCDLALEFSQNHLKPDGALLVKCFHGSGYSQIVEKFKRQFRVVAARKPKASRDKSSETFILGKHLKRPA.

Residues glycine 60, tryptophan 62, aspartate 92, aspartate 108, and aspartate 133 each contribute to the S-adenosyl-L-methionine site. The active-site Proton acceptor is the lysine 173.

The protein belongs to the class I-like SAM-binding methyltransferase superfamily. RNA methyltransferase RlmE family.

It localises to the cytoplasm. It catalyses the reaction uridine(2552) in 23S rRNA + S-adenosyl-L-methionine = 2'-O-methyluridine(2552) in 23S rRNA + S-adenosyl-L-homocysteine + H(+). Specifically methylates the uridine in position 2552 of 23S rRNA at the 2'-O position of the ribose in the fully assembled 50S ribosomal subunit. The polypeptide is Ribosomal RNA large subunit methyltransferase E (Paraburkholderia xenovorans (strain LB400)).